The sequence spans 154 residues: Fimbrial protein (154 aa).

Positions 1-6 are cleaved as a propeptide — leader sequence; sequence MKAQKG. Position 7 is an N-methylphenylalanine (phenylalanine 7). The helical transmembrane segment at 7 to 27 threads the bilayer; that stretch reads FTLIELMIVVAIIGILAAIAI. A disulfide bond links cysteine 133 and cysteine 151. O-linked (FucNAc...) serine glycosylation is present at serine 154.

It belongs to the N-Me-Phe pilin family. In terms of assembly, the pili are polar flexible filaments of about 5.4 nanometers diameter and 2.5 micrometers average length; they consist of only a single polypeptide chain arranged in a helical configuration of five subunits per turn in the assembled pilus. Post-translationally, O-glycosylated; glycan consists of 5NbetaOHC47NFmPse(alpha2-4)Xyl(beta1-3)FucNAc in beta1-O linkage to Ser.

It localises to the fimbrium. The protein resides in the membrane. This Pseudomonas aeruginosa protein is Fimbrial protein (pilA).